Reading from the N-terminus, the 76-residue chain is Senegalin (76 aa).

A signal peptide spans 1-22; sequence MLSLKKSMLLLFFLGMVSFSLA. Residues 23–55 constitute a propeptide that is removed on maturation; sequence NKRSDGKRADEEGEDKRADEEGEDKRADEEGED. The tract at residues 24 to 54 is disordered; that stretch reads KRSDGKRADEEGEDKRADEEGEDKRADEEGE. Leu75 carries the post-translational modification Leucine amide.

As to expression, expressed by the skin glands.

It localises to the secreted. Its function is as follows. Antimicrobial peptide with activity against the Gram-positive bacterium S.aureus NCTC 10788 (MIC=50 um) and the yeast C.albicans NCPF 1467 (MIC=150 uM). Ineffective against the Gram-negative bacterium E.coli NCTC 10418. Induces a dose-dependent contraction of rat urinary bladder smooth muscle (EC50=2.9 nM) and a dose-dependent relaxation of rat tail artery smooth muscle (EC50=37.7 nM). The sequence is that of Senegalin from Kassina senegalensis (Senegal running frog).